The sequence spans 147 residues: Endoribonuclease YbeY (147 aa).

Zn(2+) is bound by residues H111, H115, and D121.

Belongs to the endoribonuclease YbeY family. It depends on Zn(2+) as a cofactor.

The protein localises to the cytoplasm. Functionally, single strand-specific metallo-endoribonuclease involved in late-stage 70S ribosome quality control and in maturation of the 3' terminus of the 16S rRNA. The sequence is that of Endoribonuclease YbeY from Amoebophilus asiaticus (strain 5a2).